Here is a 337-residue protein sequence, read N- to C-terminus: 15-cis-phytoene synthase (337 aa).

The protein belongs to the phytoene/squalene synthase family. It depends on ATP as a cofactor. Requires Mn(2+) as cofactor. Mg(2+) serves as cofactor.

The catalysed reaction is 2 (2E,6E,10E)-geranylgeranyl diphosphate = 15-cis-phytoene + 2 diphosphate. It participates in carotenoid biosynthesis; phytoene biosynthesis. In terms of biological role, involved in the biosynthesis of carotenoids. Catalyzes the condensation of two molecules of geranylgeranyl diphosphate (GGPP) to give prephytoene diphosphate (PPPP) and the subsequent rearrangement of the cyclopropylcarbinyl intermediate to yield 15-cis-phytoene. In Synechocystis sp. (strain ATCC 27184 / PCC 6803 / Kazusa), this protein is 15-cis-phytoene synthase (crtB).